The following is a 98-amino-acid chain: Co-chaperonin GroES (98 aa).

This sequence belongs to the GroES chaperonin family. Heptamer of 7 subunits arranged in a ring. Interacts with the chaperonin GroEL.

The protein resides in the cytoplasm. In terms of biological role, together with the chaperonin GroEL, plays an essential role in assisting protein folding. The GroEL-GroES system forms a nano-cage that allows encapsulation of the non-native substrate proteins and provides a physical environment optimized to promote and accelerate protein folding. GroES binds to the apical surface of the GroEL ring, thereby capping the opening of the GroEL channel. This Kineococcus radiotolerans (strain ATCC BAA-149 / DSM 14245 / SRS30216) protein is Co-chaperonin GroES.